The following is a 457-amino-acid chain: Multidrug resistance protein MdtK (457 aa).

12 helical membrane-spanning segments follow: residues 11–31, 53–73, 93–113, 127–147, 160–180, 189–209, 243–263, 276–296, 314–334, 350–370, 387–407, and 418–438; these read LLAL…MGFV, IWLP…PVIA, WLAG…GYII, AVGY…FQVA, GMVM…IFIY, GGVG…LAMV, LPIA…ALLV, IALN…AAVT, AART…IFTV, VVTL…SDSI, IFYI…YILA, and PAGF…MMML.

The protein belongs to the multi antimicrobial extrusion (MATE) (TC 2.A.66.1) family. MdtK subfamily.

It localises to the cell inner membrane. Its function is as follows. Multidrug efflux pump that functions probably as a Na(+)/drug antiporter. The protein is Multidrug resistance protein MdtK of Escherichia coli O9:H4 (strain HS).